A 227-amino-acid polypeptide reads, in one-letter code: Probable septum site-determining protein MinC (227 aa).

This sequence belongs to the MinC family. In terms of assembly, interacts with MinD and FtsZ.

Functionally, cell division inhibitor that blocks the formation of polar Z ring septums. Rapidly oscillates between the poles of the cell to destabilize FtsZ filaments that have formed before they mature into polar Z rings. Prevents FtsZ polymerization. The protein is Probable septum site-determining protein MinC of Geobacillus thermodenitrificans (strain NG80-2).